We begin with the raw amino-acid sequence, 1237 residues long: ATP-dependent RNA helicase DEAH13 (1237 aa).

Disordered regions lie at residues methionine 1–valine 51 and alanine 115–threonine 148. Over residues serine 24–glycine 38 the composition is skewed to polar residues. The segment covering serine 131–methionine 143 has biased composition (acidic residues). The Helicase ATP-binding domain occupies methionine 251–leucine 443. Glycine 264–threonine 271 is an ATP binding site. A DEAH box motif is present at residues aspartate 367–histidine 370. A disordered region spans residues aspartate 543–aspartate 585. A compositionally biased stretch (acidic residues) spans asparagine 567–aspartate 585. Residues alanine 605–asparagine 776 enclose the Helicase C-terminal domain. A disordered region spans residues glutamate 876–phenylalanine 910.

It belongs to the DEAD box helicase family. DEAH subfamily.

It catalyses the reaction ATP + H2O = ADP + phosphate + H(+). The sequence is that of ATP-dependent RNA helicase DEAH13 from Arabidopsis thaliana (Mouse-ear cress).